A 343-amino-acid chain; its full sequence is Dehydrodolichyl diphosphate synthase complex subunit SRT1 (343 aa).

The protein belongs to the UPP synthase family. As to quaternary structure, forms an active dehydrodolichyl diphosphate synthase complex with NUS1. It depends on Mg(2+) as a cofactor.

It localises to the lipid droplet. The enzyme catalyses n isopentenyl diphosphate + (2E,6E)-farnesyl diphosphate = a di-trans,poly-cis-polyprenyl diphosphate + n diphosphate. It participates in protein modification; protein glycosylation. With NUS1, forms the dehydrodolichyl diphosphate synthase (DDS) complex, an essential component of the dolichol monophosphate (Dol-P) biosynthetic machinery. Adds multiple copies of isopentenyl pyrophosphate (IPP) to farnesyl pyrophosphate (FPP) to produce dehydrodolichyl diphosphate (Dedol-PP), a precursor of dolichol which is utilized as a sugar carrier in protein glycosylation in the endoplasmic reticulum (ER). This chain is Dehydrodolichyl diphosphate synthase complex subunit SRT1, found in Saccharomyces cerevisiae (strain ATCC 204508 / S288c) (Baker's yeast).